Here is a 159-residue protein sequence, read N- to C-terminus: 2-C-methyl-D-erythritol 2,4-cyclodiphosphate synthase (159 aa).

2 residues coordinate a divalent metal cation: D8 and H10. 4-CDP-2-C-methyl-D-erythritol 2-phosphate is bound by residues 8–10 (DVH) and 34–35 (HS). H42 serves as a coordination point for a divalent metal cation. Residues 56 to 58 (DIG), 61 to 65 (FPDTD), 100 to 106 (AQAPKML), 132 to 135 (TTTE), F139, and R142 contribute to the 4-CDP-2-C-methyl-D-erythritol 2-phosphate site.

The protein belongs to the IspF family. Homotrimer. It depends on a divalent metal cation as a cofactor.

The enzyme catalyses 4-CDP-2-C-methyl-D-erythritol 2-phosphate = 2-C-methyl-D-erythritol 2,4-cyclic diphosphate + CMP. It functions in the pathway isoprenoid biosynthesis; isopentenyl diphosphate biosynthesis via DXP pathway; isopentenyl diphosphate from 1-deoxy-D-xylulose 5-phosphate: step 4/6. In terms of biological role, involved in the biosynthesis of isopentenyl diphosphate (IPP) and dimethylallyl diphosphate (DMAPP), two major building blocks of isoprenoid compounds. Catalyzes the conversion of 4-diphosphocytidyl-2-C-methyl-D-erythritol 2-phosphate (CDP-ME2P) to 2-C-methyl-D-erythritol 2,4-cyclodiphosphate (ME-CPP) with a corresponding release of cytidine 5-monophosphate (CMP). In Klebsiella pneumoniae subsp. pneumoniae (strain ATCC 700721 / MGH 78578), this protein is 2-C-methyl-D-erythritol 2,4-cyclodiphosphate synthase.